Reading from the N-terminus, the 518-residue chain is Receptor-interacting serine/threonine-protein kinase 3 (518 aa).

Position 2 is a phosphoserine (serine 2). A Protein kinase domain is found at 21–287 (LENQELVGKG…ECLPKTDEVF (267 aa)). An ATP-binding site is contributed by 27 to 35 (VGKGGFGTV). Residue lysine 42 forms a Glycyl lysine isopeptide (Lys-Gly) (interchain with G-Cter in ubiquitin) linkage. An ATP-binding site is contributed by lysine 50. Catalysis depends on aspartate 142, which acts as the Proton acceptor. Residue serine 164 is modified to Phosphoserine. Threonine 182 carries the phosphothreonine modification. Serine 199 and serine 227 each carry phosphoserine; by autocatalysis. Threonine 252 carries the phosphothreonine modification. Serine 299 is subject to Phosphoserine. Position 333 is a phosphothreonine (threonine 333). Residues lysine 351 and lysine 363 each participate in a glycyl lysine isopeptide (Lys-Gly) (interchain with G-Cter in ubiquitin) cross-link. Positions 355 to 443 (EEPPSSVPKK…WSCRTPEPNP (89 aa)) are disordered. Residues 384-408 (TAGTSSDSMAQPPQTPETSTFRNQM) show a composition bias toward polar residues. Serine 389 bears the Phosphoserine mark. The residue at position 401 (threonine 401) is a Phosphothreonine. The short motif at 450 to 466 (VNIYNCSGVQVGDNNYL) is the RIP homotypic interaction motif (RHIM) element. The disordered stretch occupies residues 476 to 518 (TWGLAPSGKGRGLQHPPPVGSQEGPKDPEAWSRPQGWYNHSGK). A Glycyl lysine isopeptide (Lys-Gly) (interchain with G-Cter in ubiquitin) cross-link involves residue lysine 518.

This sequence belongs to the protein kinase superfamily. TKL Ser/Thr protein kinase family. Interacts (via RIP homotypic interaction motif) with RIPK1 (via RIP homotypic interaction motif); this interaction induces RIPK1 phosphorylation and formation of a RIPK1-RIPK3 necrosis-inducing complex. Interacts with MLKL; the interaction is direct and triggers necroptosis. Interacts with ZBP1 (via RIP homotypic interaction motif); interaction with ZBP1 activates RIPK3, triggering necroptosis. Upon TNF-induced necrosis, the RIPK1-RIPK3 dimer further interacts with PGAM5 and MLKL; the formation of this complex leads to PGAM5 phosphorylation and increase in PGAM5 phosphatase activity. Binds TRAF2 and is recruited to the TNFR-1 signaling complex. Interacts with PYGL, GLUL and GLUD1; these interactions result in activation of these metabolic enzymes. Interacts with BIRC2/c-IAP1, BIRC3/c-IAP2 and XIAP/BIRC4. Interacts with ARHGEF2. Interacts with PELI1 (via atypical FHA domain); the phosphorylated form at Thr-182 binds preferentially to PELI1. Interacts with BUB1B, TRAF2 and STUB1. Interacts with CASP6. Component of the AIM2 PANoptosome complex, a multiprotein complex that drives inflammatory cell death (PANoptosis). As to quaternary structure, (Microbial infection) Interacts (via RIP homotypic interaction motif/RHIM) with herpes simplex virus 1/HHV-1 protein RIR1/ICP6 (via RHIM); this interaction may induce heteromeric amyloid assemblies and prevent necroptosis activation. In terms of assembly, (Microbial infection) Interacts (via RIP homotypic interaction motif/RHIM) with herpes simplex virus 2/HHV-2 protein RIR1/ICP10 (via RHIM); this interaction prevents necroptosis activation. In terms of processing, (Microbial infection) Proteolytically cleaved by S.flexneri OspD3 within the RIP homotypic interaction motif (RHIM), leading to its degradation and inhibition of necroptosis. RIPK1 and RIPK3 undergo reciprocal auto- and trans-phosphorylation. Autophosphorylated following interaction with ZBP1. Phosphorylation of Ser-199 plays a role in the necroptotic function of RIPK3. Autophosphorylates at Ser-227 following activation by ZBP1: phosphorylation at these sites is a hallmark of necroptosis and is required for binding MLKL. Phosphorylation at Thr-182 is important for its kinase activity, interaction with PELI1 and PELI1-mediated 'Lys-48'-linked polyubiquitination and for its ability to mediate TNF-induced necroptosis. Post-translationally, polyubiquitinated with 'Lys-48' and 'Lys-63'-linked chains by BIRC2/c-IAP1 and BIRC3/c-IAP2, leading to activation of NF-kappa-B. Polyubiquitinated with 'Lys-48'-linked chains by PELI1 leading to its subsequent proteasome-dependent degradation. Ubiquitinated by STUB1 leading to its subsequent proteasome-dependent degradation. Deubiquitinated by USP22. In terms of tissue distribution, highly expressed in the pancreas. Detected at lower levels in heart, placenta, lung and kidney. As to expression, expression is significantly increased in colon and lung cancers.

The protein localises to the cytoplasm. Its subcellular location is the cytosol. It localises to the nucleus. It catalyses the reaction L-seryl-[protein] + ATP = O-phospho-L-seryl-[protein] + ADP + H(+). It carries out the reaction L-threonyl-[protein] + ATP = O-phospho-L-threonyl-[protein] + ADP + H(+). Activity is stimulated by ZBP1, which senses double-stranded Z-RNA structures. RIPK3-dependent necroptosis is inhibited by RIPK1: RIPK1 prevents the ZBP1-induced activation of RIPK3 via FADD-mediated recruitment of CASP8, which cleaves RIPK1 and limits TNF-induced necroptosis. Its function is as follows. Serine/threonine-protein kinase that activates necroptosis and apoptosis, two parallel forms of cell death. Necroptosis, a programmed cell death process in response to death-inducing TNF-alpha family members, is triggered by RIPK3 following activation by ZBP1. Activated RIPK3 forms a necrosis-inducing complex and mediates phosphorylation of MLKL, promoting MLKL localization to the plasma membrane and execution of programmed necrosis characterized by calcium influx and plasma membrane damage. In addition to TNF-induced necroptosis, necroptosis can also take place in the nucleus in response to orthomyxoviruses infection: following ZBP1 activation, which senses double-stranded Z-RNA structures, nuclear RIPK3 catalyzes phosphorylation and activation of MLKL, promoting disruption of the nuclear envelope and leakage of cellular DNA into the cytosol. Also regulates apoptosis: apoptosis depends on RIPK1, FADD and CASP8, and is independent of MLKL and RIPK3 kinase activity. Phosphorylates RIPK1: RIPK1 and RIPK3 undergo reciprocal auto- and trans-phosphorylation. In some cell types, also able to restrict viral replication by promoting cell death-independent responses. In response to Zika virus infection in neurons, promotes a cell death-independent pathway that restricts viral replication: together with ZBP1, promotes a death-independent transcriptional program that modifies the cellular metabolism via up-regulation expression of the enzyme ACOD1/IRG1 and production of the metabolite itaconate. Itaconate inhibits the activity of succinate dehydrogenase, generating a metabolic state in neurons that suppresses replication of viral genomes. RIPK3 binds to and enhances the activity of three metabolic enzymes: GLUL, GLUD1, and PYGL. These metabolic enzymes may eventually stimulate the tricarboxylic acid cycle and oxidative phosphorylation, which could result in enhanced ROS production. (Microbial infection) In case of herpes simplex virus 1/HHV-1 infection, forms heteromeric amyloid structures with HHV-1 protein RIR1/ICP6 which may inhibit RIPK3-mediated necroptosis, thereby preventing host cell death pathway and allowing viral evasion. The protein is Receptor-interacting serine/threonine-protein kinase 3 of Homo sapiens (Human).